Reading from the N-terminus, the 102-residue chain is Small ribosomal subunit protein uS10 (102 aa).

It belongs to the universal ribosomal protein uS10 family. In terms of assembly, part of the 30S ribosomal subunit.

Its function is as follows. Involved in the binding of tRNA to the ribosomes. The chain is Small ribosomal subunit protein uS10 from Pediococcus pentosaceus (strain ATCC 25745 / CCUG 21536 / LMG 10740 / 183-1w).